An 81-amino-acid chain; its full sequence is Photosystem I iron-sulfur center (81 aa).

4Fe-4S ferredoxin-type domains follow at residues 2–31 and 39–68; these read SHTV…MIPW and IASS…VRVY. [4Fe-4S] cluster is bound by residues Cys-11, Cys-14, Cys-17, Cys-21, Cys-48, Cys-51, Cys-54, and Cys-58.

As to quaternary structure, the eukaryotic PSI reaction center is composed of at least 11 subunits. It depends on [4Fe-4S] cluster as a cofactor.

The protein localises to the plastid. It is found in the chloroplast thylakoid membrane. It carries out the reaction reduced [plastocyanin] + hnu + oxidized [2Fe-2S]-[ferredoxin] = oxidized [plastocyanin] + reduced [2Fe-2S]-[ferredoxin]. Apoprotein for the two 4Fe-4S centers FA and FB of photosystem I (PSI); essential for photochemical activity. FB is the terminal electron acceptor of PSI, donating electrons to ferredoxin. The C-terminus interacts with PsaA/B/D and helps assemble the protein into the PSI complex. Required for binding of PsaD and PsaE to PSI. PSI is a plastocyanin-ferredoxin oxidoreductase, converting photonic excitation into a charge separation, which transfers an electron from the donor P700 chlorophyll pair to the spectroscopically characterized acceptors A0, A1, FX, FA and FB in turn. This is Photosystem I iron-sulfur center from Chaetosphaeridium globosum (Charophycean green alga).